A 262-amino-acid chain; its full sequence is Flap endonuclease Xni (262 aa).

Position 105 (aspartate 105) interacts with Mg(2+). The 5'-3' exonuclease domain occupies 162 to 257 (ERSQFLDLMA…FRVIDSPPEK (96 aa)). 5 residues coordinate K(+): leucine 172, alanine 173, proline 181, isoleucine 183, and isoleucine 186. Positions 185–190 (GIGPKS) are interaction with DNA.

It belongs to the Xni family. It depends on Mg(2+) as a cofactor. Requires K(+) as cofactor.

Functionally, has flap endonuclease activity. During DNA replication, flap endonucleases cleave the 5'-overhanging flap structure that is generated by displacement synthesis when DNA polymerase encounters the 5'-end of a downstream Okazaki fragment. The polypeptide is Flap endonuclease Xni (Shewanella baltica (strain OS223)).